The primary structure comprises 324 residues: Porphobilinogen deaminase (324 aa).

S-(dipyrrolylmethanemethyl)cysteine is present on C246. The tract at residues 261–279 is insert; it reads GQAPEEGGRAAASQAPAAL.

It belongs to the HMBS family. Monomer. It depends on dipyrromethane as a cofactor.

It carries out the reaction 4 porphobilinogen + H2O = hydroxymethylbilane + 4 NH4(+). The protein operates within porphyrin-containing compound metabolism; protoporphyrin-IX biosynthesis; coproporphyrinogen-III from 5-aminolevulinate: step 2/4. Functionally, tetrapolymerization of the monopyrrole PBG into the hydroxymethylbilane pre-uroporphyrinogen in several discrete steps. The chain is Porphobilinogen deaminase (hemC) from Paenibacillus macerans (Bacillus macerans).